Reading from the N-terminus, the 159-residue chain is LVTEIADTDNFINLSFLRLFRAARLIKLLRQGYTIRILLWTFVQSFKALPYVCLLIAMLFFIYAIIGMQVFGNIALNDETSINRHNNFRTFLQALMLLFRSATGEAWHEIMLSCLSNRACDPLSGLTKNECGSDFAYFYFVSFIFLCSFLMLNLFVAVI.

The chain crosses the membrane as a helical span at residues 1 to 5; that stretch reads LVTEI. The stretch at 1-159 is one IV repeat; it reads LVTEIADTDN…LMLNLFVAVI (159 aa). The Extracellular segment spans residues 6–13; the sequence is ADTDNFIN. N-linked (GlcNAc...) asparagine glycosylation occurs at Asn13. A helical transmembrane segment spans residues 14–32; the sequence is LSFLRLFRAARLIKLLRQG. Over 33–51 the chain is Cytoplasmic; sequence YTIRILLWTFVQSFKALPY. The helical transmembrane segment at 52-71 threads the bilayer; the sequence is VCLLIAMLFFIYAIIGMQVF. The Extracellular portion of the chain corresponds to 72-135; sequence GNIALNDETS…LTKNECGSDF (64 aa). A helical transmembrane segment spans residues 136-155; that stretch reads AYFYFVSFIFLCSFLMLNLF. Over 156–159 the chain is Cytoplasmic; sequence VAVI.

Belongs to the calcium channel alpha-1 subunit (TC 1.A.1.11) family. CACNA1B subfamily. As to quaternary structure, multisubunit complex consisting of alpha-1, alpha-2, beta and delta subunits in a 1:1:1:1 ratio. The channel activity is directed by the pore-forming and voltage-sensitive alpha-1 subunit. In many cases, this subunit is sufficient to generate voltage-sensitive calcium channel activity. The auxiliary subunits beta and alpha-2/delta linked by a disulfide bridge regulate the channel activity. Interacts with RIMBP2. Post-translationally, phosphorylated in vitro by CaM-kinase II, PKA, PKC and CGPK.

Its subcellular location is the membrane. It catalyses the reaction Ca(2+)(in) = Ca(2+)(out). In terms of biological role, voltage-sensitive calcium channels (VSCC) mediate the entry of calcium ions into excitable cells and are also involved in a variety of calcium-dependent processes, including muscle contraction, hormone or neurotransmitter release, gene expression, cell motility, cell division and cell death. This alpha-1B subunit gives rise to N-type calcium currents. N-type calcium channels belong to the 'high-voltage activated' (HVA) group. They are involved in pain signaling. Calcium channels containing alpha-1B subunit may play a role in directed migration of immature neurons. Mediates Ca(2+) release probability at hippocampal neuronal soma and synaptic terminals. The polypeptide is Voltage-dependent N-type calcium channel subunit alpha-1B (CACNA1B) (Gallus gallus (Chicken)).